The following is a 167-amino-acid chain: Beta-3 adrenergic receptor (167 aa).

Residues 1 to 25 (RVGADAEAQECHSNPRCCSFASNMP) lie on the Extracellular side of the membrane. A disulfide bond links cysteine 11 and cysteine 17. Residues 26-47 (YALLSSSVSFYLPLLVMLFVYA) form a helical membrane-spanning segment. Residues 48 to 114 (RVFVVAKRQR…LPLREHRALR (67 aa)) are Cytoplasmic-facing. The segment at 66–97 (RFPPEESPRSPSRSPSPVAGGTGEAPDGVPSC) is disordered. The chain crosses the membrane as a helical span at residues 115 to 136 (TLGLIMGIFSLCWLPFFLANVL). The Extracellular segment spans residues 137–148 (RALAGPSIVPNG). A helical transmembrane segment spans residues 149–167 (VFIALNWLGYANSAFNPLI).

Belongs to the G-protein coupled receptor 1 family. Adrenergic receptor subfamily. ADRB3 sub-subfamily. In terms of assembly, interacts with ARRDC3.

The protein localises to the cell membrane. Beta-adrenergic receptors mediate the catecholamine-induced activation of adenylate cyclase through the action of G proteins. Beta-3 is involved in the regulation of lipolysis and thermogenesis. The polypeptide is Beta-3 adrenergic receptor (ADRB3) (Meriones unguiculatus (Mongolian jird)).